The sequence spans 723 residues: Nucleolar protein 11 (723 aa).

Lys-346 is subject to N6-methyllysine. A disordered region spans residues 549-572 (FGPEDGNCSEDSQQLNDKPADTAH).

Interacts with UTP4. Interacts with FBL/fibrillarin in a transcription-dependent manner. May associate with the proposed t-UTP subcomplex of the SSU processome containing at least UTP4, WDR43, HEATR1, UTP15, WDR75.

The protein resides in the nucleus. Its subcellular location is the nucleolus. Its function is as follows. Ribosome biogenesis factor. May be required for both optimal rDNA transcription and small subunit (SSU) pre-rRNA processing at sites A', A0, 1 and 2b. This is Nucleolar protein 11 (Nol11) from Mus musculus (Mouse).